Reading from the N-terminus, the 311-residue chain is p-hydroxybenzoic acid efflux pump subunit AaeA (311 aa).

The helical transmembrane segment at 11 to 31 (VGITVLVVVLAVIAIFNVWAF) threads the bilayer.

The protein belongs to the membrane fusion protein (MFP) (TC 8.A.1) family.

The protein resides in the cell inner membrane. In terms of biological role, forms an efflux pump with AaeB. This is p-hydroxybenzoic acid efflux pump subunit AaeA from Yersinia pseudotuberculosis serotype O:3 (strain YPIII).